Consider the following 758-residue polypeptide: MVTIHNLGFPRIGRHRELKFALEKYWSNAISQDELLQTASTLCKQYWQNQNKLDWVPVGDFSFYDHVLDMSFLLGNIPKRAENLSDNELDNYFRVARGRAFINESERTCIQAGEMTKWFDTNYHYIVPEFSQETNFALQAQRLIAQIRQAQAQGVKVKPVVIGPVTYLWLGKSKDKINKLDLLDSLVKVYTQLFDELVKLGIEWIQVDEPILVTELETDWQVAFRKAYDILANSPIKLLLVSYFGTLQDNLSFACGLPIDGLHIDAINAKDEVQLLIDSLSDDKILSLGVVNGRNIWKTDLSTTLLWLEPIHQQLQNRLWLAPSCSLLHVPVDLDSEQELNDDIKSWLGFAVQKLEELSLLAQALNQGQASVTKEIANNIDAINSKKYSPLVHNAKVKERIAKVNDELGNRQSDYKSRTKLQSEKFNLPLYPTTTIGSFPQTLEIRQARHDYKLGKLSAEQYMQTMRSEIRYCVQVQEHLGLDVLVHGEPERNDMVEYFGQQLSGYVFSQFGWVQSYGSRCVKPPIIFGDIFRPKPMTLDWITYAQSLTNKPMKGMITGPVTMLNWSFVRDDQPRATTCLQLSLAIRDEVLDLEKSNINIIQIDEAALREGLPLRKSQWQTYLDWAIRAYRVSANGVSDETQIHTHMCYSEFNDIIEAIAQMDADVITIETSRSDMELLDIFDEFDYPNEIGPGVYDIHSPNIPSVDSIVELMQKAAKYIPIKRLWVNPDCGLKTRHWDEVNLALTNMVLASQQLRKN.

Residues 16–19 (RELK) and Lys117 contribute to the 5-methyltetrahydropteroyltri-L-glutamate site. L-homocysteine is bound by residues 436-438 (IGS) and Glu489. L-methionine-binding positions include 436-438 (IGS) and Glu489. Residues 520 to 521 (RC) and Trp566 each bind 5-methyltetrahydropteroyltri-L-glutamate. Residue Asp604 participates in L-homocysteine binding. Asp604 contacts L-methionine. Glu610 is a 5-methyltetrahydropteroyltri-L-glutamate binding site. Zn(2+) is bound by residues His646, Cys648, and Glu670. The Proton donor role is filled by His699. Cys731 contacts Zn(2+).

The protein belongs to the vitamin-B12 independent methionine synthase family. It depends on Zn(2+) as a cofactor.

It carries out the reaction 5-methyltetrahydropteroyltri-L-glutamate + L-homocysteine = tetrahydropteroyltri-L-glutamate + L-methionine. The protein operates within amino-acid biosynthesis; L-methionine biosynthesis via de novo pathway; L-methionine from L-homocysteine (MetE route): step 1/1. Its function is as follows. Catalyzes the transfer of a methyl group from 5-methyltetrahydrofolate to homocysteine resulting in methionine formation. The sequence is that of 5-methyltetrahydropteroyltriglutamate--homocysteine methyltransferase from Ruthia magnifica subsp. Calyptogena magnifica.